Here is a 198-residue protein sequence, read N- to C-terminus: Peptidyl-tRNA hydrolase (198 aa).

Residue Y15 coordinates tRNA. H20 functions as the Proton acceptor in the catalytic mechanism. Residues F65, N67, and N113 each contribute to the tRNA site.

It belongs to the PTH family. As to quaternary structure, monomer.

It is found in the cytoplasm. The catalysed reaction is an N-acyl-L-alpha-aminoacyl-tRNA + H2O = an N-acyl-L-amino acid + a tRNA + H(+). In terms of biological role, hydrolyzes ribosome-free peptidyl-tRNAs (with 1 or more amino acids incorporated), which drop off the ribosome during protein synthesis, or as a result of ribosome stalling. Functionally, catalyzes the release of premature peptidyl moieties from peptidyl-tRNA molecules trapped in stalled 50S ribosomal subunits, and thus maintains levels of free tRNAs and 50S ribosomes. The polypeptide is Peptidyl-tRNA hydrolase (Ehrlichia chaffeensis (strain ATCC CRL-10679 / Arkansas)).